The sequence spans 392 residues: [Phe13]-bombesin receptor (392 aa).

At 1–40 the chain is on the extracellular side; sequence MPEGFQSLNQTLPSAISSIAHLESLNDSFILGAKQSEDVS. N-linked (GlcNAc...) asparagine glycosylation is found at N9 and N26. The chain crosses the membrane as a helical span at residues 41–62; the sequence is PGLEILALISVTYAVIISVGIL. Over 63–81 the chain is Cytoplasmic; the sequence is GNTILIKVFFKIKSMQTVP. Residues 82 to 102 form a helical membrane-spanning segment; that stretch reads NIFITSLAFGDLLLLLTCVPV. At 103–120 the chain is on the extracellular side; it reads DASRYIVDTWMFGRAGCK. Residues C119 and C202 are joined by a disulfide bond. Residues 121-142 form a helical membrane-spanning segment; that stretch reads IISFIQLTSVGVSVFTLTVLSA. The Cytoplasmic portion of the chain corresponds to 143-162; sequence DRYRAIVKPLQLQTSDAVLK. A helical transmembrane segment spans residues 163 to 183; the sequence is TCGKAVCVWIISMLLAAPEAV. Topologically, residues 184 to 219 are extracellular; the sequence is FSDLYEFGSSEKNTTFEACAPYPVSEKILQETHSLI. The helical transmembrane segment at 220-240 threads the bilayer; the sequence is CFLVFYIVPLSIISAYYFLIA. At 241–271 the chain is on the cytoplasmic side; sequence KTLYKSTFNMPAEEHTHARKQIESRKRVAKT. A helical membrane pass occupies residues 272–292; the sequence is VLVLVALFAVCWLPNHMLYLY. Topologically, residues 293 to 312 are extracellular; the sequence is RSFTYHSAVNSSAFHLSATI. The helical transmembrane segment at 313-332 threads the bilayer; the sequence is FARVLAFSNSCVNPFALYWL. The Cytoplasmic segment spans residues 333–392; that stretch reads SRSFRQHFKKQVYCCKTEPPASQQSPTHSSTITGITAVKGNIQMSEISITLLSAYDVKKE. C346 carries S-palmitoyl cysteine lipidation.

The protein belongs to the G-protein coupled receptor 1 family. In terms of tissue distribution, expressed only in brain, primarily in cortex and forebrain and at low levels in the midbrain.

It localises to the cell membrane. In terms of biological role, the relative rank potency of bombesin-like peptides for this receptor is [Phe13]bombesin &gt; [Leu13]bombesin &gt; GRP &gt; neuromedin-B. In Bombina orientalis (Oriental fire-bellied toad), this protein is [Phe13]-bombesin receptor (BB4).